Reading from the N-terminus, the 88-residue chain is Kunitz-type kappaPI-theraphotoxin-Hs1c (88 aa).

Residues 1–27 (MGIARILSAVLFLSVLFVVTFPALLSA) form the signal peptide. A propeptide spanning residues 28 to 33 (DHHDGR) is cleaved from the precursor. A BPTI/Kunitz inhibitor domain is found at 37–85 (CRLPSDRGRCKASFECWYFNGRTCAKFIYGGCGGNGNKFPTQEACMKRC). Disulfide bonds link cysteine 37-cysteine 85, cysteine 46-cysteine 68, and cysteine 60-cysteine 81.

Belongs to the venom Kunitz-type family. 02 (native) subfamily. In terms of tissue distribution, expressed by the venom gland.

It localises to the secreted. Serine protease inhibitor that inhibits trypsin (Ki=0.281 nM), kallikrein (Ki=337 nM), and chymotrypsin. This chain is Kunitz-type kappaPI-theraphotoxin-Hs1c, found in Cyriopagopus schmidti (Chinese bird spider).